Consider the following 359-residue polypeptide: 3-dehydroquinate synthase (359 aa).

NAD(+)-binding positions include 70-75 (DGEQYK), 105-109 (GVIGD), 129-130 (TT), lysine 142, lysine 151, and 169-172 (FYKT). Positions 184, 247, and 264 each coordinate Zn(2+).

This sequence belongs to the sugar phosphate cyclases superfamily. Dehydroquinate synthase family. Requires Co(2+) as cofactor. The cofactor is Zn(2+). NAD(+) is required as a cofactor.

Its subcellular location is the cytoplasm. The catalysed reaction is 7-phospho-2-dehydro-3-deoxy-D-arabino-heptonate = 3-dehydroquinate + phosphate. Its pathway is metabolic intermediate biosynthesis; chorismate biosynthesis; chorismate from D-erythrose 4-phosphate and phosphoenolpyruvate: step 2/7. Functionally, catalyzes the conversion of 3-deoxy-D-arabino-heptulosonate 7-phosphate (DAHP) to dehydroquinate (DHQ). The protein is 3-dehydroquinate synthase of Francisella tularensis subsp. holarctica (strain FTNF002-00 / FTA).